Consider the following 260-residue polypeptide: Acetylglutamate kinase (260 aa).

Residues 46 to 47 (GG), arginine 68, and asparagine 160 each bind substrate.

The protein belongs to the acetylglutamate kinase family. ArgB subfamily.

The protein resides in the cytoplasm. It carries out the reaction N-acetyl-L-glutamate + ATP = N-acetyl-L-glutamyl 5-phosphate + ADP. It functions in the pathway amino-acid biosynthesis; L-arginine biosynthesis; N(2)-acetyl-L-ornithine from L-glutamate: step 2/4. Its function is as follows. Catalyzes the ATP-dependent phosphorylation of N-acetyl-L-glutamate. The chain is Acetylglutamate kinase from Shewanella baltica (strain OS223).